The primary structure comprises 216 residues: Protein ORM2 (216 aa).

The disordered stretch occupies residues 1 to 50 (MIDRTKNESPAFEESPLTPNVSNLKPFPSQSNKISTPVTDHRRRRSSSVI). The Cytoplasmic segment spans residues 1–78 (MIDRTKNESP…NMNATWVDQR (78 aa)). 2 positions are modified to phosphoserine: Ser-9 and Ser-15. Residues 17 to 38 (LTPNVSNLKPFPSQSNKISTPV) are compositionally biased toward polar residues. Residue Thr-18 is modified to Phosphothreonine. Ser-22, Ser-29, and Ser-51 each carry phosphoserine. The helical transmembrane segment at 79–99 (GAWLIHIVVIVLLRLFYSLFG) threads the bilayer. At 100–103 (STPK) the chain is on the extracellular side. Residues 104–124 (WTWTLTNMTYIIGFYIMFHLV) traverse the membrane as a helical segment. Residues 125-148 (KGTPFDFNGGAYDNLTMWEQINDE) lie on the Cytoplasmic side of the membrane. The chain crosses the membrane as a helical span at residues 149–169 (TLYTPTRKFLLIVPIVLFLIS). Topologically, residues 170–177 (NQYYRNDM) are extracellular. The helical transmembrane segment at 178-198 (TLFLSNLAVTVLIGVVPKLGI) threads the bilayer. The Cytoplasmic portion of the chain corresponds to 199-216 (THRLRISIPGITGRAQIS).

This sequence belongs to the ORM family. As to quaternary structure, component of the SPOTS complex, at least composed of LCB1/2 (LCB1 and/or LCB2), ORM1/2 (ORM1 and/or ORM2), SAC1 and TSC3. Post-translationally, phosphorylated in case of disruption of sphingolipid synthesis. Phosphorylation regulates the inhibitory activity of serine palmitoyltransferases (LCB1 and LCB2).

It localises to the endoplasmic reticulum membrane. Functionally, component of the SPOTS complex that acts as a negative regulator of sphingolipid synthesis. Acts by inhibiting serine palmitoyltransferases (LCB1 and LCB2) activity. Along with ORM1, plays a role in the phosphorylation of LAC1 and YPK1, the distribution of actin patches between mother and daughter cells, and in endocytosis. This is Protein ORM2 (ORM2) from Saccharomyces cerevisiae (strain ATCC 204508 / S288c) (Baker's yeast).